The chain runs to 238 residues: Valine-rich protein (238 aa).

Residues 1–16 (MQAVLLVVALFGAALA) form the signal peptide.

In terms of tissue distribution, prismatic layer of shell (at protein level). Expressed primarily in the mantle with highest level in the mantle edge and lower level in the mantle pallium.

It is found in the secreted. The polypeptide is Valine-rich protein (Pinctada maxima (Silver-lipped pearl oyster)).